The chain runs to 117 residues: Large ribosomal subunit protein bL20 (117 aa).

Belongs to the bacterial ribosomal protein bL20 family.

Binds directly to 23S ribosomal RNA and is necessary for the in vitro assembly process of the 50S ribosomal subunit. It is not involved in the protein synthesizing functions of that subunit. This Aliivibrio salmonicida (strain LFI1238) (Vibrio salmonicida (strain LFI1238)) protein is Large ribosomal subunit protein bL20.